Here is a 415-residue protein sequence, read N- to C-terminus: Dynein assembly factor with WD repeat domains 1 (415 aa).

WD repeat units follow at residues 90–129 (AHILPLTNVALNKSGSCFITGSYDRTCKLWDTASGEELNT), 132–174 (GHRN…HTFR), 175–214 (GHTAEIVCLSFNPQSTLVATGSMDTTAKLWNIQNGEEVCT), 217–256 (GHSAEIISLSFNTSGDRIITGSFDHTVVVWDADTGGKVNI), 259–298 (GHCAEISSALFNWDCSLILTGSMDKTCMLWDATNGKCVAT), 301–340 (GHDDEILDSCFDYTGKLIATASADGTARIFSAATRKCIAK), 343–384 (GHEG…QVLE), and 386–415 (HTDEIFSCTFNYKGNIVITGSKDNTCRIWR).

This sequence belongs to the WD repeat WDR69 family. Interacts with IFT46.

The protein resides in the cytoplasm. It localises to the cytoskeleton. It is found in the flagellum basal body. The protein localises to the flagellum axoneme. Its function is as follows. Required for axonemal dynein assembly and ciliary motility in ciliated organs, including Kupffer's vesicle, during embryogenesis. Facilitates the onset of robust cilia motility during development. The sequence is that of Dynein assembly factor with WD repeat domains 1 (DAW1) from Macaca fascicularis (Crab-eating macaque).